The chain runs to 543 residues: MAKSILFGEESRRAMQAGVDKLANAVKVTLGPKGRNVVLDKKFGAPLITNDGVTIAKEIELEDMYENMGAQLVKEVATKTNDVAGDGTTTATLLAQAIIREGLKNVTAGANPMLIRKGIKLAVDTAVEQIKKSSKQVDGKEDIARVAAISAADPEIGKLIADAMEKVGNEGVITVEESNTMATELEVVEGMQFDRGYLSPYMVTDAEKMEAVLENPYILLTDKKISNIQEILPILEQIVQQGKKLLIIAEDIEGEALATLVVNKLRGTFTCVAVKAPGFGDRRKEMLRDIAILTGGEVISEEVGRELKDVTLDMLGTAESVKISKENTTIVNGKGNKEVIADRVGQIRRQIEETSSEFDKEKLQERLAKLAGGVAVVKVGAATETELKERKLRIEDALAATKAAVEEGIVAGGGTAYLRAIKEVEKLTDDNAEVRLGIAIIRRALEEPVRQIAANAGLEGSVIIDKIKNSEDGIGFDALEGEYTNMMQKGIVDPAKVTRSALQNAASVASTFLTTECVVAEIPEKNPMPAAPGMGGMGMDGMY.

ATP contacts are provided by residues 29-32 (TLGP), 86-90 (DGTTT), glycine 413, 477-479 (DAL), and aspartate 493.

This sequence belongs to the chaperonin (HSP60) family. Forms a cylinder of 14 subunits composed of two heptameric rings stacked back-to-back. Interacts with the co-chaperonin GroES.

The protein resides in the cytoplasm. It carries out the reaction ATP + H2O + a folded polypeptide = ADP + phosphate + an unfolded polypeptide.. In terms of biological role, together with its co-chaperonin GroES, plays an essential role in assisting protein folding. The GroEL-GroES system forms a nano-cage that allows encapsulation of the non-native substrate proteins and provides a physical environment optimized to promote and accelerate protein folding. This chain is Chaperonin GroEL, found in Clostridium novyi (strain NT).